The chain runs to 302 residues: Sulfate adenylyltransferase subunit 2 (302 aa).

The interval 280–302 (RQGRLIDSDQSASMEQKKRQGYF) is disordered.

The protein belongs to the PAPS reductase family. CysD subfamily. In terms of assembly, heterodimer composed of CysD, the smaller subunit, and CysN.

It catalyses the reaction sulfate + ATP + H(+) = adenosine 5'-phosphosulfate + diphosphate. The protein operates within sulfur metabolism; hydrogen sulfide biosynthesis; sulfite from sulfate: step 1/3. With CysN forms the ATP sulfurylase (ATPS) that catalyzes the adenylation of sulfate producing adenosine 5'-phosphosulfate (APS) and diphosphate, the first enzymatic step in sulfur assimilation pathway. APS synthesis involves the formation of a high-energy phosphoric-sulfuric acid anhydride bond driven by GTP hydrolysis by CysN coupled to ATP hydrolysis by CysD. This Shewanella frigidimarina (strain NCIMB 400) protein is Sulfate adenylyltransferase subunit 2.